The sequence spans 457 residues: Ig mu chain C region (457 aa).

The interval 1-105 is CH1; the sequence is SSSAPLLFPL…GEKEKKVELQ (105 aa). Residues cysteine 27 and cysteine 89 are joined by a disulfide bond. Asparagine 45 and asparagine 113 each carry an N-linked (GlcNAc...) asparagine glycan. The CH2 stretch occupies residues 106-220; sequence VTPELPPNVS…KNVSSVCMGD (115 aa). A disulfide bond links cysteine 136 and cysteine 200. N-linked (GlcNAc...) asparagine glycans are attached at residues asparagine 212, asparagine 276, and asparagine 283. Residues 221-326 form a CH3 region; it reads DTSTGISVFL…PLKQSLSRPK (106 aa). Cystine bridges form between cysteine 248–cysteine 307 and cysteine 355–cysteine 417. A CH4 region spans residues 327-457; that stretch reads DVANDPPSVF…VLSDTASTCY (131 aa). N-linked (GlcNAc...) asparagine glycosylation is present at asparagine 444.

The chain is Ig mu chain C region from Suncus murinus (Asian house shrew).